The sequence spans 346 residues: Inner membrane protein YnjI (346 aa).

Over 1-38 (MKKVLLQNHPGSEKYSFNGWEIFNSNFERMIKENKAML) the chain is Periplasmic. A helical membrane pass occupies residues 39–59 (LCKWGFYLTCVVAVMFVFAAI). Over 60–68 (TSNGLNERG) the chain is Cytoplasmic. The chain crosses the membrane as a helical span at residues 69–89 (LITAGCSFLYLLIMMGLIVRA). Residues 90-234 (GFKAKKEQLH…DCANHSSGKS (145 aa)) are Periplasmic-facing. Residues 235–255 (SAKLIWAAELSWMISISSTAF) form a helical membrane-spanning segment. Over 256-346 (QNGTIEEELA…PWGASSVKYS (91 aa)) the chain is Cytoplasmic.

It localises to the cell inner membrane. This chain is Inner membrane protein YnjI (ynjI), found in Escherichia coli (strain K12).